Reading from the N-terminus, the 454-residue chain is Bifunctional protein GlmU (454 aa).

The interval 1-226 (MALNVVILAA…AIEVEGANNR (226 aa)) is pyrophosphorylase. UDP-N-acetyl-alpha-D-glucosamine-binding positions include 8–11 (LAAG), lysine 22, glutamine 73, 78–79 (GT), 100–102 (YGD), glycine 137, glutamate 151, asparagine 166, and asparagine 224. Aspartate 102 serves as a coordination point for Mg(2+). Residue asparagine 224 participates in Mg(2+) binding. The linker stretch occupies residues 227 to 247 (VQLAQLERAYQAREAEKLMLA). The segment at 248–454 (GANLRDPHRI…DWKRPVKIKK (207 aa)) is N-acetyltransferase. UDP-N-acetyl-alpha-D-glucosamine is bound by residues arginine 330 and lysine 348. Histidine 360 serves as the catalytic Proton acceptor. 2 residues coordinate UDP-N-acetyl-alpha-D-glucosamine: tyrosine 363 and asparagine 374. Acetyl-CoA is bound by residues alanine 377, 383–384 (NY), serine 402, alanine 420, and arginine 437.

The protein in the N-terminal section; belongs to the N-acetylglucosamine-1-phosphate uridyltransferase family. This sequence in the C-terminal section; belongs to the transferase hexapeptide repeat family. In terms of assembly, homotrimer. Requires Mg(2+) as cofactor.

It localises to the cytoplasm. It catalyses the reaction alpha-D-glucosamine 1-phosphate + acetyl-CoA = N-acetyl-alpha-D-glucosamine 1-phosphate + CoA + H(+). It carries out the reaction N-acetyl-alpha-D-glucosamine 1-phosphate + UTP + H(+) = UDP-N-acetyl-alpha-D-glucosamine + diphosphate. Its pathway is nucleotide-sugar biosynthesis; UDP-N-acetyl-alpha-D-glucosamine biosynthesis; N-acetyl-alpha-D-glucosamine 1-phosphate from alpha-D-glucosamine 6-phosphate (route II): step 2/2. The protein operates within nucleotide-sugar biosynthesis; UDP-N-acetyl-alpha-D-glucosamine biosynthesis; UDP-N-acetyl-alpha-D-glucosamine from N-acetyl-alpha-D-glucosamine 1-phosphate: step 1/1. It functions in the pathway bacterial outer membrane biogenesis; LPS lipid A biosynthesis. In terms of biological role, catalyzes the last two sequential reactions in the de novo biosynthetic pathway for UDP-N-acetylglucosamine (UDP-GlcNAc). The C-terminal domain catalyzes the transfer of acetyl group from acetyl coenzyme A to glucosamine-1-phosphate (GlcN-1-P) to produce N-acetylglucosamine-1-phosphate (GlcNAc-1-P), which is converted into UDP-GlcNAc by the transfer of uridine 5-monophosphate (from uridine 5-triphosphate), a reaction catalyzed by the N-terminal domain. The sequence is that of Bifunctional protein GlmU from Shewanella putrefaciens (strain CN-32 / ATCC BAA-453).